The sequence spans 423 residues: Keratin, type I cytoskeletal 18 (423 aa).

Ser-2 is subject to N-acetylserine. A head region spans residues 2-71; sequence SFTTRSTTFS…GLAGMGGVQT (70 aa). Ser-7, Ser-11, Ser-16, and Ser-19 each carry phosphoserine. Phosphoserine; alternate occurs at positions 31 and 32. Residues Ser-31 and Ser-32 are each glycosylated (O-linked (GlcNAc) serine; alternate). The residue at position 35 (Ser-35) is a Phosphoserine. Tyr-37 is subject to Phosphotyrosine. The residue at position 43 (Ser-43) is a Phosphoserine. Arg-46 is modified (omega-N-methylarginine). A Phosphoserine; alternate modification is found at Ser-50. Ser-50 carries an O-linked (GlcNAc) serine; alternate glycan. A Phosphoserine; by MAPKAPK2 and MAPKAPK3 modification is found at Ser-52. A phosphoserine mark is found at Ser-57 and Ser-60. Residues 62–366 are necessary for interaction with PNN; that stretch reads GLAGMGGVQT…EALLNIKVKL (305 aa). The segment at 69–121 is interaction with TRADD; sequence VQTEKETMQDLNDRLASYLDKVKNLETENRRLESKIREYLEKRGPQGVRDWGH. The segment at 72 to 107 is coil 1A; that stretch reads EKETMQDLNDRLASYLDKVKNLETENRRLESKIREY. The IF rod domain occupies 72 to 384; sequence EKETMQDLND…RLLEDGDDFS (313 aa). Residue Lys-73 forms a Glycyl lysine isopeptide (Lys-Gly) (interchain with G-Cter in SUMO2) linkage. Ser-85 is modified (phosphoserine). Residues 108 to 125 form a linker 1 region; that stretch reads LEKRGPQGVRDWGHYFKT. Lys-124 is subject to N6-acetyllysine. Residues 126-217 form a coil 1B region; the sequence is IEDLRAQIFA…KNHEEEVQGL (92 aa). 2 positions are modified to phosphoserine: Ser-137 and Ser-170. The tract at residues 218–241 is linker 12; it reads EAQIASSGLTVEVDAPKSQDLSKI. Residues 236-384 form an interaction with DNAJB6 region; the sequence is QDLSKIMADI…RLLEDGDDFS (149 aa). Lys-240 participates in a covalent cross-link: Glycyl lysine isopeptide (Lys-Gly) (interchain with G-Cter in SUMO2). The segment at 242–380 is coil 2; sequence MADIRAQYEQ…ATYRRLLEDG (139 aa). Thr-295 bears the Phosphothreonine mark. Residues Lys-363 and Lys-365 each participate in a glycyl lysine isopeptide (Lys-Gly) (interchain with G-Cter in SUMO2) cross-link. Positions 381-423 are tail; that stretch reads DDFSLNDALDSSNSMQTVQRTTTRKVVDGKVVSETNDTRVLRH. Residues Ser-384, Ser-391, Ser-392, and Ser-394 each carry the phosphoserine modification. Thr-397 carries the phosphothreonine modification. Lys-410 participates in a covalent cross-link: Glycyl lysine isopeptide (Lys-Gly) (interchain with G-Cter in SUMO2).

It belongs to the intermediate filament family. In terms of assembly, heterotetramer of two type I and two type II keratins. KRT18 associates with KRT8. Interacts with PNN and mutated CFTR. Interacts with YWHAE, YWHAH and YWHAZ only when phosphorylated. Interacts with DNAJB6, TCHP and TRADD. Interacts with the thrombin-antithrombin complex. Interacts with FAM83H. Interacts with EPPK1. Interacts with PKP1 and PKP2. Phosphorylation increases by IL-6. Post-translationally, proteolytically cleaved by caspases during epithelial cell apoptosis. Cleavage occurs at Asp-231 by either caspase-3, caspase-6 or caspase-7. In terms of processing, dephosphorylated by ethanol. O-GlcNAcylation increases solubility, and decreases stability by inducing proteasomal degradation. Expressed on the plasma membrane of hepatocytes and in the narrow apical portions of supporting cells in the vomeronasal sensory epithelium. Detected in the type III alveolar cells of the lung, in the proliferative crypt epithelium of the small intestine and in the older intragemmal cells of the tongue.

It localises to the nucleus matrix. It is found in the cytoplasm. Its subcellular location is the perinuclear region. The protein resides in the nucleus. The protein localises to the nucleolus. Its function is as follows. When phosphorylated, plays a role in filament reorganization. Involved in the delivery of mutated CFTR to the plasma membrane. Together with KRT8, is involved in interleukin-6 (IL-6)-mediated barrier protection. Involved in the uptake of thrombin-antithrombin complexes by hepatic cells. The chain is Keratin, type I cytoskeletal 18 from Rattus norvegicus (Rat).